The primary structure comprises 278 residues: UPF0750 membrane protein YxkD (278 aa).

5 helical membrane-spanning segments follow: residues 8 to 28, 46 to 66, 77 to 97, 101 to 121, and 145 to 165; these read VLMLVIGAFFFALAVNLFAIP, LFQWSPGVTNFILNAFLLLIG, YTIIAVAANSLFLHLTHGWSI, ELIINTIFAGVFAGVGIGMII, and ISYALLFFDLIVVFSSYFIIG.

Belongs to the UPF0750 family.

The protein resides in the cell membrane. This chain is UPF0750 membrane protein YxkD (yxkD), found in Bacillus subtilis (strain 168).